A 468-amino-acid chain; its full sequence is Probable Xaa-Pro aminopeptidase pepP (468 aa).

Residues Asp264, Asp275, Glu398, and Glu438 each contribute to the Mn(2+) site.

The protein belongs to the peptidase M24B family. It depends on Mn(2+) as a cofactor.

The enzyme catalyses Release of any N-terminal amino acid, including proline, that is linked to proline, even from a dipeptide or tripeptide.. In terms of biological role, catalyzes the removal of a penultimate prolyl residue from the N-termini of peptides. This is Probable Xaa-Pro aminopeptidase pepP (pepP) from Talaromyces stipitatus (strain ATCC 10500 / CBS 375.48 / QM 6759 / NRRL 1006) (Penicillium stipitatum).